The chain runs to 404 residues: Sulfate adenylyltransferase (404 aa).

This sequence belongs to the sulfate adenylyltransferase family.

The catalysed reaction is sulfate + ATP + H(+) = adenosine 5'-phosphosulfate + diphosphate. It participates in sulfur metabolism; hydrogen sulfide biosynthesis; sulfite from sulfate: step 1/3. In Chlorobaculum tepidum (strain ATCC 49652 / DSM 12025 / NBRC 103806 / TLS) (Chlorobium tepidum), this protein is Sulfate adenylyltransferase.